Here is a 390-residue protein sequence, read N- to C-terminus: uncharacterized protein (390 aa).

This sequence belongs to the arsA ATPase family.

This is an uncharacterized protein from Streptomyces coelicolor (strain ATCC BAA-471 / A3(2) / M145).